A 478-amino-acid polypeptide reads, in one-letter code: Isoeugenol monooxygenase (478 aa).

Residues His167, His218, His282, and His471 each coordinate Fe cation.

This sequence belongs to the carotenoid oxygenase family. It depends on Fe(2+) as a cofactor.

It carries out the reaction (E)-isoeugenol + O2 = vanillin + acetaldehyde. Inhibited by Co(2+), Ni(2+) and Zn(2+), which may inhibit enzyme activity by replacing iron in the catalytic residues. Inhibited by incubation with high concentrations of the iron chelators 1,10-phenanthroline and Tiron. However, iron is not completely removed by the chelators, suggesting that iron is tightly bound to the enzyme. Functionally, involved in isoeugenol degradation. Catalyzes the oxidative cleavage of the side chain double-bond of isoeugenol to form vanillin and acetaldehyde. The polypeptide is Isoeugenol monooxygenase (Pseudomonas nitroreducens).